The primary structure comprises 248 residues: Probable transcriptional regulatory protein RHOS4_22610 (248 aa).

Residues 1 to 21 are disordered; the sequence is MAGHSKWANIQHRKGKQDKLR.

It belongs to the TACO1 family.

The protein resides in the cytoplasm. This is Probable transcriptional regulatory protein RHOS4_22610 from Cereibacter sphaeroides (strain ATCC 17023 / DSM 158 / JCM 6121 / CCUG 31486 / LMG 2827 / NBRC 12203 / NCIMB 8253 / ATH 2.4.1.) (Rhodobacter sphaeroides).